A 301-amino-acid chain; its full sequence is 4-hydroxybenzoate octaprenyltransferase (301 aa).

7 helical membrane passes run 34–54 (IGSLLLLWPTWWALWLAAGGL), 57–77 (LWTLFVFTAGVWLTRSAGCVI), 108–128 (LWVFVVLMLVAFALVLSLNWL), 163–183 (WGIPMGFAAVQGSVPLLAWLL), 222–242 (DLIAQGVLYALMFAALVLVGL), 248–268 (IAYWAGLGIAALLVAYEFHIA), and 280–300 (FLHNNWVGLAIFVGIAASLAL).

This sequence belongs to the UbiA prenyltransferase family. Requires Mg(2+) as cofactor.

It localises to the cell inner membrane. The catalysed reaction is all-trans-octaprenyl diphosphate + 4-hydroxybenzoate = 4-hydroxy-3-(all-trans-octaprenyl)benzoate + diphosphate. Its pathway is cofactor biosynthesis; ubiquinone biosynthesis. Catalyzes the prenylation of para-hydroxybenzoate (PHB) with an all-trans polyprenyl group. Mediates the second step in the final reaction sequence of ubiquinone-8 (UQ-8) biosynthesis, which is the condensation of the polyisoprenoid side chain with PHB, generating the first membrane-bound Q intermediate 3-octaprenyl-4-hydroxybenzoate. The protein is 4-hydroxybenzoate octaprenyltransferase of Xanthomonas campestris pv. campestris (strain 8004).